Here is a 339-residue protein sequence, read N- to C-terminus: Glyceraldehyde-3-phosphate dehydrogenase (339 aa).

NAD(+) contacts are provided by residues 12–13, aspartate 39, arginine 84, and serine 127; that span reads RI. D-glyceraldehyde 3-phosphate-binding positions include 157-159, threonine 188, arginine 203, 216-217, and arginine 239; these read SCT and TG. Cysteine 158 (nucleophile) is an active-site residue. Asparagine 320 contributes to the NAD(+) binding site.

The protein belongs to the glyceraldehyde-3-phosphate dehydrogenase family. In terms of assembly, homotetramer.

Its subcellular location is the cytoplasm. It carries out the reaction D-glyceraldehyde 3-phosphate + phosphate + NAD(+) = (2R)-3-phospho-glyceroyl phosphate + NADH + H(+). It functions in the pathway carbohydrate degradation; glycolysis; pyruvate from D-glyceraldehyde 3-phosphate: step 1/5. Functionally, catalyzes the oxidative phosphorylation of glyceraldehyde 3-phosphate (G3P) to 1,3-bisphosphoglycerate (BPG) using the cofactor NAD. The first reaction step involves the formation of a hemiacetal intermediate between G3P and a cysteine residue, and this hemiacetal intermediate is then oxidized to a thioester, with concomitant reduction of NAD to NADH. The reduced NADH is then exchanged with the second NAD, and the thioester is attacked by a nucleophilic inorganic phosphate to produce BPG. This is Glyceraldehyde-3-phosphate dehydrogenase (gapA) from Mycobacterium leprae (strain TN).